The following is a 107-amino-acid chain: Urease subunit beta (107 aa).

Belongs to the urease beta subunit family. In terms of assembly, heterotrimer of UreA (gamma), UreB (beta) and UreC (alpha) subunits. Three heterotrimers associate to form the active enzyme.

The protein localises to the cytoplasm. The catalysed reaction is urea + 2 H2O + H(+) = hydrogencarbonate + 2 NH4(+). Its pathway is nitrogen metabolism; urea degradation; CO(2) and NH(3) from urea (urease route): step 1/1. The protein is Urease subunit beta of Bacillus sp. (strain TB-90).